A 377-amino-acid polypeptide reads, in one-letter code: Probable transposase for insertion sequence element IS5377 (377 aa).

The protein belongs to the transposase 11 family.

In Geobacillus stearothermophilus (Bacillus stearothermophilus), this protein is Probable transposase for insertion sequence element IS5377.